Reading from the N-terminus, the 191-residue chain is Fe/S biogenesis protein NfuA (191 aa).

Residues Cys-149 and Cys-152 each contribute to the [4Fe-4S] cluster site.

The protein belongs to the NfuA family. In terms of assembly, homodimer. The cofactor is [4Fe-4S] cluster.

Involved in iron-sulfur cluster biogenesis. Binds a 4Fe-4S cluster, can transfer this cluster to apoproteins, and thereby intervenes in the maturation of Fe/S proteins. Could also act as a scaffold/chaperone for damaged Fe/S proteins. This is Fe/S biogenesis protein NfuA from Buchnera aphidicola subsp. Baizongia pistaciae (strain Bp).